A 140-amino-acid polypeptide reads, in one-letter code: uncharacterized protein (140 aa).

Tandem repeats lie at residues 1–10, 11–20, 21–30, 31–40, 41–50, 51–60, 61–70, 71–80, 81–90, 91–100, 101–110, 111–120, 121–130, and 131–140. The 14 X 10 AA tandem repeats of [MT]-F-[AG]-R-L-[CS]-P-V-[SI]-[ET] stretch occupies residues 1-140; that stretch reads MFARLCPVSE…MFGRLCPVIT (140 aa).

This is an uncharacterized protein from Homo sapiens (Human).